A 127-amino-acid polypeptide reads, in one-letter code: Putative defensin-like protein 180 (127 aa).

The first 26 residues, 1–26, serve as a signal peptide directing secretion; that stretch reads MERITSLVFFASFLIIFVSGVNQTRA. 8 cysteine pairs are disulfide-bonded: C29–C70, C36–C55, C39–C64, C43–C66, C81–C127, C92–C112, C97–C121, and C101–C123.

Belongs to the DEFL family.

Its subcellular location is the secreted. This Arabidopsis thaliana (Mouse-ear cress) protein is Putative defensin-like protein 180 (LCR58).